The chain runs to 88 residues: Large ribosomal subunit protein bL31B (88 aa).

The protein belongs to the bacterial ribosomal protein bL31 family. Type B subfamily. As to quaternary structure, part of the 50S ribosomal subunit.

This Glaesserella parasuis serovar 5 (strain SH0165) (Haemophilus parasuis) protein is Large ribosomal subunit protein bL31B.